We begin with the raw amino-acid sequence, 126 residues long: Nascent polypeptide-associated complex protein (126 aa).

Positions 10 to 77 (PRMMKQMQKM…AKKVAKAEEK (68 aa)) constitute an NAC-A/B domain.

This sequence belongs to the NAC-alpha family. In terms of assembly, homodimer. Interacts with the ribosome. Binds ribosomal RNA.

Contacts the emerging nascent chain on the ribosome. The sequence is that of Nascent polypeptide-associated complex protein from Methanococcus maripaludis (strain C5 / ATCC BAA-1333).